The primary structure comprises 319 residues: tRNA U34 carboxymethyltransferase (319 aa).

Residues K88, W102, K107, G126, L176–E177, M192, Y196, and R311 contribute to the carboxy-S-adenosyl-L-methionine site.

The protein belongs to the class I-like SAM-binding methyltransferase superfamily. CmoB family. Homotetramer.

The catalysed reaction is carboxy-S-adenosyl-L-methionine + 5-hydroxyuridine(34) in tRNA = 5-carboxymethoxyuridine(34) in tRNA + S-adenosyl-L-homocysteine + H(+). Functionally, catalyzes carboxymethyl transfer from carboxy-S-adenosyl-L-methionine (Cx-SAM) to 5-hydroxyuridine (ho5U) to form 5-carboxymethoxyuridine (cmo5U) at position 34 in tRNAs. This is tRNA U34 carboxymethyltransferase from Pseudomonas syringae pv. tomato (strain ATCC BAA-871 / DC3000).